Reading from the N-terminus, the 757-residue chain is Receptor protein kinase-like protein At4g34220 (757 aa).

The first 26 residues, 1–26 (MTSNRSNLLFSLVLFHFLFVPTQLQA), serve as a signal peptide directing secretion. LRR repeat units follow at residues 104–126 (YLRILDLSSNFFNGSLPDSVFNA), 128–150 (ELQSISLGSNNLSGDLPKSVNSV), 152–174 (NLQLLNLSANAFTGEIPLNISLL), 176–198 (NLTVVSLSKNTFSGDIPSGFEAA), 199–219 (QILDLSSNLLNGSLPKDLGGK), 220–242 (SLHYLNLSHNKVLGEISPNFAEK), and 245–267 (ANATVDLSFNNLTGPIPSSLSLL). A helical membrane pass occupies residues 339–359 (IAAITVADIVGLAFIGLLVLY). Residues 471 to 753 (KASAYILGTT…KELVQVLEKI (283 aa)) enclose the Protein kinase domain. Ser-473 is modified (phosphoserine). Residue Thr-494 is modified to Phosphothreonine. Ser-553 bears the Phosphoserine mark. The tract at residues 633–654 (ARESHTTGPTSSSPYQPPEWST) is disordered. Residues Thr-638 and Thr-639 each carry the phosphothreonine modification. Positions 638–654 (TTGPTSSSPYQPPEWST) are enriched in polar residues.

The protein belongs to the protein kinase superfamily.

The protein resides in the membrane. This chain is Receptor protein kinase-like protein At4g34220, found in Arabidopsis thaliana (Mouse-ear cress).